The sequence spans 117 residues: Eukaryotic translation initiation factor 4E-binding protein 1 (117 aa).

Polar residues-rich tracts occupy residues 1–12 and 33–47; these read MSAGSSCSQTPS and YSTT…TTPG. The disordered stretch occupies residues 1-47; that stretch reads MSAGSSCSQTPSRAIPTRRVALGDGVQLPPGDYSTTPGGTLFSTTPG. S2 carries the N-acetylserine modification. Phosphothreonine is present on residues T36 and T40. The residue at position 43 (S43) is a Phosphoserine. T45 carries the post-translational modification Phosphothreonine; by MTOR. Phosphothreonine is present on T49. Y53 is subject to Phosphotyrosine. A YXXXXLphi motif motif is present at residues 53 to 59; sequence YDRKFLM. K56 is covalently cross-linked (Glycyl lysine isopeptide (Lys-Gly) (interchain with G-Cter in ubiquitin)). S64 carries the post-translational modification Phosphoserine; by DYRK2, MAPK1, MAPK3 and MTOR. The interval 64–117 is disordered; that stretch reads SPVAKTPPKDLPTIPGVTSPTSDEPPMQASQSHLHSSPEDKRAGGEESQFEMDI. Position 69 is a phosphothreonine; by MTOR (T69). T76 is modified (phosphothreonine). Over residues 79 to 98 the composition is skewed to polar residues; that stretch reads GVTSPTSDEPPMQASQSHLH. Phosphoserine is present on residues S82, S95, and S99. A compositionally biased stretch (basic and acidic residues) spans 99 to 108; the sequence is SSPEDKRAGG. Position 100 is a phosphoserine; by DYRK2 (S100). A Phosphoserine modification is found at S111. The TOS motif signature appears at 113–117; the sequence is FEMDI.

This sequence belongs to the eIF4E-binding protein family. In terms of assembly, hypophosphorylated EIF4EBP1 competes with EIF4G1/EIF4G3 to interact with EIF4E; insulin stimulated MAP-kinase (MAPK1 and MAPK3) or mTORC1 phosphorylation of EIF4EBP1 causes dissociation of the complex allowing EIF4G1/EIF4G3 to bind and consequent initiation of translation. Interacts (via TOS motif) with RPTOR; promoting phosphorylation by mTORC1. In terms of processing, phosphorylated on serine and threonine residues in response to insulin, EGF and PDGF. Phosphorylation at Thr-36, Thr-45, Ser-64 and Thr-69, corresponding to the hyperphosphorylated form, is regulated by mTORC1 and abolishes binding to EIF4E. Ubiquitinated: when eIF4E levels are low, hypophosphorylated form is ubiquitinated by the BCR(KLHL25) complex, leading to its degradation and serving as a homeostatic mechanism to maintain translation and prevent eIF4E inhibition when eIF4E levels are low. Not ubiquitinated when hyperphosphorylated (at Thr-36, Thr-45, Ser-64 and Thr-69) or associated with eIF4E. As to expression, expressed in all tissues examined; highest levels in fat and skeletal tissue, lowest levels in kidney.

The protein resides in the cytoplasm. Its subcellular location is the nucleus. Repressor of translation initiation that regulates EIF4E activity by preventing its assembly into the eIF4F complex: hypophosphorylated form competes with EIF4G1/EIF4G3 and strongly binds to EIF4E, leading to repress translation. In contrast, hyperphosphorylated form dissociates from EIF4E, allowing interaction between EIF4G1/EIF4G3 and EIF4E, leading to initiation of translation. Mediates the regulation of protein translation by hormones, growth factors and other stimuli that signal through the MAP kinase and mTORC1 pathways. This Rattus norvegicus (Rat) protein is Eukaryotic translation initiation factor 4E-binding protein 1 (Eif4ebp1).